The chain runs to 331 residues: MASLKNKHFMIGLSLTFIVALFSFLAAKLPILDKVGALTIAILIAILYRHFRGYPEQYSSGITFSSKYLLRFAIILYGLKLNIFDIIGQGSKLLAIDVGVVIFSIVMMLFVNKLLHGDKNIALLLGVGTGVCGAAAIAAVAPIFKSREKDTAISIGIIALIGTIFSLIYTAIYAIFSMTTNVYGAWSGVSLHEIAHVVLAGGFGGSDALKIALLGKLGRVFLLIPLTIVLILIMRFRSSESSSKGRISIPYFLIGFVIMALVNTYVTIPSVLLNILNTISTICLLMAMVALGLNVAFKDLKNRALKPLMTIIITSICLSSLAFIVVHWLYS.

11 consecutive transmembrane segments (helical) span residues 9-26 (FMIGLSLTFIVALFSFLA), 31-48 (ILDKVGALTIAILIAILY), 69-88 (LLRFAIILYGLKLNIFDIIG), 93-115 (LLAIDVGVVIFSIVMMLFVNKLL), 122-144 (ALLLGVGTGVCGAAAIAAVAPIF), 154-176 (SIGIIALIGTIFSLIYTAIYAIF), 183-202 (YGAWSGVSLHEIAHVVLAGG), 217-234 (LGRVFLLIPLTIVLILIM), 247-269 (ISIPYFLIGFVIMALVNTYVTIP), 273-295 (LNILNTISTICLLMAMVALGLNV), and 308-330 (LMTIIITSICLSSLAFIVVHWLY).

Belongs to the UPF0324 family.

The protein localises to the cell membrane. The sequence is that of UPF0324 membrane protein SA0329 from Staphylococcus aureus (strain N315).